A 578-amino-acid polypeptide reads, in one-letter code: SWR1 complex bromodomain subunit bdf1 (578 aa).

A compositionally biased stretch (basic and acidic residues) spans 1-18; that stretch reads MSSESRENEVKAETKDEI. Disordered stretches follow at residues 1–89, 192–254, and 504–578; these read MSSE…PPPQ, DAEQ…RKNN, and ADSS…SESA. Residues 22–36 show a composition bias toward polar residues; sequence GSPQLNGDNNIQSSD. Composition is skewed to basic and acidic residues over residues 37–52 and 60–77; these read GHND…KRDS and LKQE…EPTV. Positions 84–190 constitute a Bromo 1 domain; it reads GMPPPQQKYC…EVFERQLKQL (107 aa). Over residues 219-242 the composition is skewed to low complexity; it reads NSSVSSTSASVAASTAPKAASPAV. A phosphoserine mark is found at Ser-221, Ser-223, and Ser-224. Position 225 is a phosphothreonine (Thr-225). Ser-226 and Ser-239 each carry phosphoserine. The 110-residue stretch at 251-360 folds into the Bromo 2 domain; the sequence is RKNNSQMRFC…NVFKEKWEAR (110 aa). The NET domain occupies 430 to 510; the sequence is RRDLTKEYGP…KPDADSSEPA (81 aa). Ser-511 is subject to Phosphoserine. The span at 526-537 shows a compositional bias: basic and acidic residues; that stretch reads VLSETEQAEKIR. Polar residues predominate over residues 550-563; sequence TSPTSPESNNAANV. A compositionally biased stretch (acidic residues) spans 566 to 578; that stretch reads SESDNESESSESA.

This sequence belongs to the BET family. In terms of assembly, component of the SWR1 chromatin-remodeling complex.

The protein localises to the nucleus. Its function is as follows. Component of the SWR1 complex which mediates the ATP-dependent exchange of histone H2A for the H2A variant HZT1 leading to transcriptional regulation of selected genes by chromatin remodeling. This chain is SWR1 complex bromodomain subunit bdf1 (bdf1), found in Schizosaccharomyces pombe (strain 972 / ATCC 24843) (Fission yeast).